The sequence spans 416 residues: Multifunctional CCA protein (416 aa).

Residues G8 and R11 each contribute to the ATP site. Residues G8 and R11 each contribute to the CTP site. Mg(2+)-binding residues include D21 and D23. Residues R91, R137, and R140 each contribute to the ATP site. R91, R137, and R140 together coordinate CTP. The region spanning 228–329 is the HD domain; the sequence is TGVHTLMVLA…VKIFDKADFW (102 aa).

The protein belongs to the tRNA nucleotidyltransferase/poly(A) polymerase family. Bacterial CCA-adding enzyme type 1 subfamily. As to quaternary structure, monomer. Can also form homodimers and oligomers. Mg(2+) is required as a cofactor. Ni(2+) serves as cofactor.

The catalysed reaction is a tRNA precursor + 2 CTP + ATP = a tRNA with a 3' CCA end + 3 diphosphate. It carries out the reaction a tRNA with a 3' CCA end + 2 CTP + ATP = a tRNA with a 3' CCACCA end + 3 diphosphate. Its function is as follows. Catalyzes the addition and repair of the essential 3'-terminal CCA sequence in tRNAs without using a nucleic acid template. Adds these three nucleotides in the order of C, C, and A to the tRNA nucleotide-73, using CTP and ATP as substrates and producing inorganic pyrophosphate. tRNA 3'-terminal CCA addition is required both for tRNA processing and repair. Also involved in tRNA surveillance by mediating tandem CCA addition to generate a CCACCA at the 3' terminus of unstable tRNAs. While stable tRNAs receive only 3'-terminal CCA, unstable tRNAs are marked with CCACCA and rapidly degraded. This chain is Multifunctional CCA protein, found in Shewanella baltica (strain OS223).